We begin with the raw amino-acid sequence, 77 residues long: Acyl carrier protein (77 aa).

The region spanning 2–77 (SDIADRVKKI…DAVKFISDAS (76 aa)) is the Carrier domain. The residue at position 37 (Ser37) is an O-(pantetheine 4'-phosphoryl)serine.

Belongs to the acyl carrier protein (ACP) family. Post-translationally, 4'-phosphopantetheine is transferred from CoA to a specific serine of apo-ACP by AcpS. This modification is essential for activity because fatty acids are bound in thioester linkage to the sulfhydryl of the prosthetic group.

The protein localises to the cytoplasm. Its pathway is lipid metabolism; fatty acid biosynthesis. Its function is as follows. Carrier of the growing fatty acid chain in fatty acid biosynthesis. This Roseobacter denitrificans (strain ATCC 33942 / OCh 114) (Erythrobacter sp. (strain OCh 114)) protein is Acyl carrier protein.